Consider the following 396-residue polypeptide: MPDIGLEEVEIIEILVSINEKIAPEQGLITVEGDKTSMEIPSPISGIVKHIFIKIGEKIKTDALIMRCEVENIDFHVKKKEEICLDNNVLNKVEKNFKKDIFFHATPLIRRLARNLNINLYDVVGTGPKNRILKEDLDLYQSNIKENLIEEKNKINFGDSKKSKTKELELSDIQKNIGNNLHRNWMNIPHVTQFDEVDITILEKFRQKYNNEKRNQKKTNENITILVFIIKVVAYALEKFPIFNSSLNINNKKIILKKYINIGFAIDVNNDLFVPVLKDVNKKNIKQLSSELILLSEKARTRKLNIEDMTGGCFTISNLGGIGGSWFSPIINSPEVAILGISKSQIKPSWNGKEFIPSLMLPLSLSYDHRVINGAYAARFITFISRVLSDMHFLIM.

In terms of domain architecture, Lipoyl-binding spans Met1–Glu69. Lys35 carries the N6-lipoyllysine modification. One can recognise a Peripheral subunit-binding (PSBD) domain in the interval His104–Gln141. The active site involves His369.

Belongs to the 2-oxoacid dehydrogenase family. Forms a 24-polypeptide structural core with octahedral symmetry. (R)-lipoate is required as a cofactor.

It carries out the reaction N(6)-[(R)-dihydrolipoyl]-L-lysyl-[protein] + acetyl-CoA = N(6)-[(R)-S(8)-acetyldihydrolipoyl]-L-lysyl-[protein] + CoA. Its function is as follows. The pyruvate dehydrogenase complex catalyzes the overall conversion of pyruvate to acetyl-CoA and CO(2). It contains multiple copies of three enzymatic components: pyruvate dehydrogenase (E1), dihydrolipoamide acetyltransferase (E2) and lipoamide dehydrogenase (E3). The sequence is that of Dihydrolipoyllysine-residue acetyltransferase component of pyruvate dehydrogenase complex (aceF) from Buchnera aphidicola subsp. Acyrthosiphon pisum (strain APS) (Acyrthosiphon pisum symbiotic bacterium).